A 432-amino-acid chain; its full sequence is Adenylosuccinate synthetase (432 aa).

Residues 13 to 19 and 41 to 43 contribute to the GTP site; these read GDEGKGK and GHT. Residue Asp-14 is the Proton acceptor of the active site. Mg(2+) contacts are provided by Asp-14 and Gly-41. Residues 14 to 17, 39 to 42, Thr-130, Arg-144, Gln-225, Thr-240, and Arg-304 contribute to the IMP site; these read DEGK and NAGH. The active-site Proton donor is His-42. 300–306 is a binding site for substrate; the sequence is ATTGRRR. GTP is bound by residues Arg-306, 332-334, and 415-417; these read KLD and STG.

The protein belongs to the adenylosuccinate synthetase family. Homodimer. Requires Mg(2+) as cofactor.

Its subcellular location is the cytoplasm. The catalysed reaction is IMP + L-aspartate + GTP = N(6)-(1,2-dicarboxyethyl)-AMP + GDP + phosphate + 2 H(+). Its pathway is purine metabolism; AMP biosynthesis via de novo pathway; AMP from IMP: step 1/2. Its function is as follows. Plays an important role in the de novo pathway of purine nucleotide biosynthesis. Catalyzes the first committed step in the biosynthesis of AMP from IMP. This chain is Adenylosuccinate synthetase, found in Klebsiella pneumoniae (strain 342).